Consider the following 313-residue polypeptide: Pyrimidine-specific ribonucleoside hydrolase RihB (313 aa).

Asp11 functions as the Proton acceptor in the catalytic mechanism. Residues Asp11, Asp16, and Val124 each contribute to the Ca(2+) site. Substrate-binding residues include Gln227 and His239. Ca(2+) is bound at residue Asp240.

It belongs to the IUNH family. RihB subfamily. Homotetramer. Ca(2+) is required as a cofactor.

The enzyme catalyses a pyrimidine ribonucleoside + H2O = a pyrimidine nucleobase + D-ribose. Its function is as follows. Hydrolyzes cytidine or uridine to ribose and cytosine or uracil, respectively. Has a clear preference for cytidine over uridine. Strictly specific for ribonucleosides. The chain is Pyrimidine-specific ribonucleoside hydrolase RihB from Shigella sonnei (strain Ss046).